The sequence spans 723 residues: Delta-like protein 1 (723 aa).

Residues 1–17 (MGSRCALALAVLSALLC) form the signal peptide. At 18–545 (QVWSSGVFEL…LEGQGGPFPW (528 aa)) the chain is on the extracellular side. One can recognise a DSL domain in the interval 177–221 (FVCDEHYYGEGCSVFCRPRDDAFGHFTCGERGEKVCNPGWKGPYC). Disulfide bonds link Cys-179-Cys-188, Cys-192-Cys-204, Cys-212-Cys-221, Cys-226-Cys-237, Cys-230-Cys-243, Cys-245-Cys-254, Cys-257-Cys-268, Cys-263-Cys-274, Cys-276-Cys-285, Cys-292-Cys-304, Cys-298-Cys-314, Cys-316-Cys-325, Cys-332-Cys-343, Cys-337-Cys-352, Cys-354-Cys-363, Cys-370-Cys-381, Cys-375-Cys-391, Cys-393-Cys-402, Cys-409-Cys-420, Cys-414-Cys-429, Cys-431-Cys-440, Cys-447-Cys-458, Cys-452-Cys-467, Cys-469-Cys-478, Cys-485-Cys-496, Cys-490-Cys-505, and Cys-507-Cys-516. EGF-like domains follow at residues 226 to 254 (CLPG…GRYC), 257 to 285 (CIRY…GLFC), and 292 to 325 (CTHH…GATC). One can recognise an EGF-like 4; calcium-binding domain in the interval 332-363 (CDPSPCKNGGSCTDLENSYSCTCPPGFYGKIC). EGF-like domains follow at residues 370–402 (CADG…GFNC) and 409–440 (CSSS…GRHC). Residues 447–478 (CASSPCANGGTCRDGVNDFSCTCPPGYTGRNC) form the EGF-like 7; calcium-binding domain. A glycan (N-linked (GlcNAc...) asparagine) is linked at Asn-477. Positions 485–516 (CEHAPCHNGATCHERGHRYVCECARGYGGPNC) constitute an EGF-like 8 domain. Residues 546 to 568 (VAVCAGVILVLMLLLGCAAVVVC) form a helical membrane-spanning segment. Over 569–723 (VRLRLQKHRP…KDECVIATEV (155 aa)) the chain is Cytoplasmic. Residue Lys-613 forms a Glycyl lysine isopeptide (Lys-Gly) (interchain with G-Cter in ubiquitin) linkage. Residues 653–664 (AVRDAHSKRDTK) show a composition bias toward basic and acidic residues. The disordered stretch occupies residues 653–702 (AVRDAHSKRDTKCQPQGSSGEEKGTPTTLRGGEASERKRPDSGCSTSKDT). Position 694 is a phosphoserine; by PKB (Ser-694). Phosphoserine is present on Ser-697. The interaction with MAGI1 stretch occupies residues 720 to 723 (ATEV).

Homodimer. Interacts with TJP1. Interacts with MAGI1 (via PDZ domain); forms a complex with CTNNB1 and CDH2 and promotes recruitment to the adherens junction and stabilization on the cell surface. Interacts with PSEN1; undergoes a presenilin-dependent gamma-secretase cleavage that releases a Dll1-intracellular form. Interacts with MFAP5. Interacts with MIB1. Interacts with NEURL1B; leads to ubiquitination. Interacts with NEURL1. Interacts with SYNJ2BP; enhances DLL1 protein stability, and promotes Notch signaling in endothelial cells. Interacts with MAGI1, MAGI2, MAGI3 and MPDZ. Interacts (via ubiquitin) with EPN1 (via IUM domain); binding with NOTCH1 attached to neighboring cell, promotes ligand ubiquitination and EPN1 interaction, leading to NECD transendocytosis and Notch signaling. Interacts with NOTCH1. Interacts with NOTCH2NLB; leading to promote Notch signaling pathway in a cell-autonomous manner through inhibition of cis DLL1-NOTCH2 interactions. In terms of processing, ubiquitinated by MIB (MIB1 or MIB2), leading to its endocytosis and subsequent degradation. Ubiquitinated; promotes recycling back to the plasma membrane and confers a strong affinity for NOTCH1. Multi-ubiquitination of Lys-613 by MIB1 promotes both cis and trans-interaction with NOTCH1, as well as activation of Notch signaling. Ubiquitinated by NEURL1B. Post-translationally, phosphorylated in a membrane association-dependent manner. Phosphorylation at Ser-697 requires the presence of Ser-694, whereas phosphorylation at Ser-694 occurs independently of the other site. Phosphorylation is required for full ligand activity in vitro and affects surface presentation, ectodomain shedding, and endocytosis. O-fucosylated. Can be elongated to a disaccharide by MFNG. Expressed in heart and pancreas, with lower expression in brain and muscle and almost no expression in placenta, lung, liver and kidney.

The protein resides in the apical cell membrane. Its subcellular location is the cell junction. It localises to the adherens junction. It is found in the membrane raft. Its function is as follows. Transmembrane ligand protein of NOTCH1, NOTCH2 and NOTCH3 receptors that binds the extracellular domain (ECD) of Notch receptor in a cis and trans fashion manner. Following transinteraction, ligand cells produce mechanical force that depends of a clathrin-mediated endocytosis, requiring ligand ubiquitination, EPN1 interaction, and actin polymerisation; these events promote Notch receptor extracellular domain (NECD) transendocytosis and triggers Notch signaling through induction of cleavage, hyperphosphorylation, and nuclear accumulation of the intracellular domain of Notch receptors (NICD). Is required for embryonic development and maintenance of adult stem cells in many different tissues and immune systeme; the DLL1-induced Notch signaling is mediated through an intercellular communication that regulates cell lineage, cell specification, cell patterning and morphogenesis through effects on differentiation and proliferation. Plays a role in brain development at different level, namely by regulating neuronal differentiation of neural precursor cells via cell-cell interaction, most likely through the lateral inhibitory system in an endogenous level dependent-manner. During neocortex development, Dll1-Notch signaling transmission is mediated by dynamic interactions between intermediate neurogenic progenitors and radial glia; the cell-cell interactions are mediated via dynamic and transient elongation processes, likely to reactivate/maintain Notch activity in neighboring progenitors, and coordinate progenitor cell division and differentiation across radial and zonal boundaries. During cerebellar development, regulates Bergmann glial monolayer formation and its morphological maturation through a Notch signaling pathway. At the retina and spinal cord level, regulates neurogenesis by preventing the premature differentiation of neural progenitors and also by maintaining progenitors in spinal cord through Notch signaling pathway. Also controls neurogenesis of the neural tube in a progenitor domain-specific fashion along the dorsoventral axis. Maintains quiescence of neural stem cells and plays a role as a fate determinant that segregates asymmetrically to one daughter cell during neural stem cells mitosis, resulting in neuronal differentiation in Dll1-inheriting cell. Plays a role in immune systeme development, namely the development of all T-cells and marginal zone (MZ) B-cells. Blocks the differentiation of progenitor cells into the B-cell lineage while promoting the emergence of a population of cells with the characteristics of a T-cell/NK-cell precursor. Also plays a role during muscle development. During early development, inhibits myoblasts differentiation from the medial dermomyotomal lip and later regulates progenitor cell differentiation. Directly modulates cell adhesion and basal lamina formation in satellite cells through Notch signaling. Maintains myogenic progenitors pool by suppressing differentiation through down-regulation of MYOD1 and is required for satellite cell homing and PAX7 expression. During craniofacial and trunk myogenesis suppresses differentiation of cranial mesoderm-derived and somite-derived muscle via MYOD1 regulation but in cranial mesoderm-derived progenitors, is neither required for satellite cell homing nor for PAX7 expression. Also plays a role during pancreatic cell development. During type B pancreatic cell development, may be involved in the initiation of proximodistal patterning in the early pancreatic epithelium. Stimulates multipotent pancreatic progenitor cells proliferation and pancreatic growth by maintaining HES1 expression and PTF1A protein levels. During fetal stages of development, is required to maintain arterial identity and the responsiveness of arterial endothelial cells for VEGFA through regulation of KDR activation and NRP1 expression. Controls sprouting angiogenesis and subsequent vertical branch formation through regulation on tip cell differentiation. Negatively regulates goblet cell differentiation in intestine and controls secretory fat commitment through lateral inhibition in small intestine. Plays a role during inner ear development; negatively regulates auditory hair cell differentiation. Plays a role during nephron development through Notch signaling pathway. Regulates growth, blood pressure and energy homeostasis. The polypeptide is Delta-like protein 1 (Homo sapiens (Human)).